The primary structure comprises 95 residues: Large ribosomal subunit protein bL27 (95 aa).

The disordered stretch occupies residues 1-25; the sequence is MAHKKGTGSTRNGRDSNAQRLGVKR. A compositionally biased stretch (polar residues) spans 7 to 19; that stretch reads TGSTRNGRDSNAQ.

The protein belongs to the bacterial ribosomal protein bL27 family.

This is Large ribosomal subunit protein bL27 from Gloeobacter violaceus (strain ATCC 29082 / PCC 7421).